A 149-amino-acid chain; its full sequence is Large ribosomal subunit protein uL15 (149 aa).

The segment covering 1 to 11 has biased composition (basic and acidic residues); the sequence is MSDPIKLHDLR. Residues 1-44 are disordered; it reads MSDPIKLHDLRPAPGAKKAKTRVGRGEASKGKTAGRGTKGTKAR.

Belongs to the universal ribosomal protein uL15 family. Part of the 50S ribosomal subunit.

Its function is as follows. Binds to the 23S rRNA. The sequence is that of Large ribosomal subunit protein uL15 from Corynebacterium jeikeium (strain K411).